The sequence spans 80 residues: Pancreatic polypeptide (80 aa).

Residues 1 to 25 form the signal peptide; that stretch reads MPPRWASLLLLACSLLLLAVPPGTA. A Tyrosine amide modification is found at tyrosine 61. Residues 65–80 constitute a propeptide that is removed on maturation; sequence SSSRVLCEEPMGAAGC.

Belongs to the NPY family.

It localises to the secreted. Functionally, hormone secreted by pancreatic cells that acts as a regulator of pancreatic and gastrointestinal functions. This Gallus gallus (Chicken) protein is Pancreatic polypeptide (PPY).